Here is a 316-residue protein sequence, read N- to C-terminus: GTP cyclohydrolase FolE2 2 (316 aa).

Belongs to the GTP cyclohydrolase IV family.

It carries out the reaction GTP + H2O = 7,8-dihydroneopterin 3'-triphosphate + formate + H(+). Its pathway is cofactor biosynthesis; 7,8-dihydroneopterin triphosphate biosynthesis; 7,8-dihydroneopterin triphosphate from GTP: step 1/1. Functionally, converts GTP to 7,8-dihydroneopterin triphosphate. The protein is GTP cyclohydrolase FolE2 2 of Burkholderia orbicola (strain MC0-3).